A 137-amino-acid chain; its full sequence is Nucleoside diphosphate kinase (137 aa).

Residues lysine 10, phenylalanine 58, arginine 86, threonine 92, arginine 103, and asparagine 113 each contribute to the ATP site. Histidine 116 serves as the catalytic Pros-phosphohistidine intermediate.

It belongs to the NDK family. As to quaternary structure, homotetramer. Requires Mg(2+) as cofactor.

It is found in the cytoplasm. The enzyme catalyses a 2'-deoxyribonucleoside 5'-diphosphate + ATP = a 2'-deoxyribonucleoside 5'-triphosphate + ADP. It catalyses the reaction a ribonucleoside 5'-diphosphate + ATP = a ribonucleoside 5'-triphosphate + ADP. Its function is as follows. Major role in the synthesis of nucleoside triphosphates other than ATP. The ATP gamma phosphate is transferred to the NDP beta phosphate via a ping-pong mechanism, using a phosphorylated active-site intermediate. This Helicobacter pylori (strain Shi470) protein is Nucleoside diphosphate kinase.